Here is a 311-residue protein sequence, read N- to C-terminus: Ornithine carbamoyltransferase (311 aa).

Carbamoyl phosphate is bound by residues S59–T62, Q86, R110, and H137–Q140. Residues N168, D228, and S232 to M233 each bind L-ornithine. Residues C267–L268 and R295 each bind carbamoyl phosphate.

This sequence belongs to the aspartate/ornithine carbamoyltransferase superfamily. OTCase family.

Its subcellular location is the cytoplasm. The catalysed reaction is carbamoyl phosphate + L-ornithine = L-citrulline + phosphate + H(+). It participates in amino-acid biosynthesis; L-arginine biosynthesis; L-arginine from L-ornithine and carbamoyl phosphate: step 1/3. Functionally, reversibly catalyzes the transfer of the carbamoyl group from carbamoyl phosphate (CP) to the N(epsilon) atom of ornithine (ORN) to produce L-citrulline. The protein is Ornithine carbamoyltransferase of Caulobacter vibrioides (strain ATCC 19089 / CIP 103742 / CB 15) (Caulobacter crescentus).